A 524-amino-acid chain; its full sequence is Mediator of RNA polymerase II transcription subunit 8 (524 aa).

M1 bears the N-acetylmethionine mark. Residues 137–162 are a coiled coil; sequence MQIERLKARMDMIAAACENAERVLAD. Disordered regions lie at residues 291-315 and 474-524; these read VPSPQHQIQQQQFQQQQQRSKLMQL and MMQT…QNPQ. 2 stretches are compositionally biased toward low complexity: residues 295–315 and 474–505; these read QHQIQQQQFQQQQQRSKLMQL and MMQTQQTQIQQSQQQQQQQQQGGYGNMQTNQQ. A compositionally biased stretch (polar residues) spans 506–524; sequence SLQPNNMMQNAQQRHQNPQ.

Belongs to the Mediator complex subunit 8 family. As to quaternary structure, component of the Mediator complex.

It is found in the nucleus. Component of the Mediator complex, a coactivator involved in the regulated transcription of nearly all RNA polymerase II-dependent genes. Mediator functions as a bridge to convey information from gene-specific regulatory proteins to the basal RNA polymerase II transcription machinery. The Mediator complex, having a compact conformation in its free form, is recruited to promoters by direct interactions with regulatory proteins and serves for the assembly of a functional preinitiation complex with RNA polymerase II and the general transcription factors. Regulator of both plant defense and flowering time. Involved in pollen tube growth. The chain is Mediator of RNA polymerase II transcription subunit 8 (MED8) from Arabidopsis thaliana (Mouse-ear cress).